The chain runs to 389 residues: Arrestin-C (389 aa).

This sequence belongs to the arrestin family. In terms of tissue distribution, retina and pineal gland.

Its function is as follows. May play a role in an as yet undefined retina-specific signal transduction. Could bind to photoactivated-phosphorylated red/green opsins. This is Arrestin-C (arr3) from Aquarana catesbeiana (American bullfrog).